A 147-amino-acid chain; its full sequence is UPF0178 protein VIBHAR_03247 (147 aa).

Belongs to the UPF0178 family.

This chain is UPF0178 protein VIBHAR_03247, found in Vibrio campbellii (strain ATCC BAA-1116).